An 88-amino-acid polypeptide reads, in one-letter code: MANTTSAKKATRKIARRTIVNKSRRTQMRGAVRTVEEAIAKGDRDAAVKAMTRCEPELMQAAQRNIIHRNAASRKVSRLTQKIAKLAK.

The protein belongs to the bacterial ribosomal protein bS20 family.

In terms of biological role, binds directly to 16S ribosomal RNA. The chain is Small ribosomal subunit protein bS20 from Rhodopseudomonas palustris (strain BisA53).